A 1381-amino-acid polypeptide reads, in one-letter code: DNA-directed RNA polymerase subunit beta (1381 aa).

Belongs to the RNA polymerase beta chain family. As to quaternary structure, the RNAP catalytic core consists of 2 alpha, 1 beta, 1 beta' and 1 omega subunit. When a sigma factor is associated with the core the holoenzyme is formed, which can initiate transcription.

The enzyme catalyses RNA(n) + a ribonucleoside 5'-triphosphate = RNA(n+1) + diphosphate. Functionally, DNA-dependent RNA polymerase catalyzes the transcription of DNA into RNA using the four ribonucleoside triphosphates as substrates. This Halorhodospira halophila (strain DSM 244 / SL1) (Ectothiorhodospira halophila (strain DSM 244 / SL1)) protein is DNA-directed RNA polymerase subunit beta.